The sequence spans 152 residues: Ribosome maturation factor RimP (152 aa).

The protein belongs to the RimP family.

Its subcellular location is the cytoplasm. Required for maturation of 30S ribosomal subunits. The polypeptide is Ribosome maturation factor RimP (Shigella boydii serotype 4 (strain Sb227)).